The chain runs to 313 residues: Small ribosomal subunit protein uS2 (313 aa).

Basic and acidic residues predominate over residues 234–243 (DEEAKEEKTK). The segment at 234 to 313 (DEEAKEEKTK…ASKAEAEEGK (80 aa)) is disordered. The span at 244 to 256 (AKTTAKKVVTKKA) shows a compositional bias: basic residues. The span at 266-297 (AEKKSEKPTTEKRPTKEAAETKETSEEPKTKE) shows a compositional bias: basic and acidic residues.

This sequence belongs to the universal ribosomal protein uS2 family.

The chain is Small ribosomal subunit protein uS2 from Coxiella burnetii (strain Dugway 5J108-111).